A 147-amino-acid polypeptide reads, in one-letter code: D-aminoacyl-tRNA deacylase (147 aa).

The short motif at 136–137 (GP) is the Gly-cisPro motif, important for rejection of L-amino acids element.

The protein belongs to the DTD family. As to quaternary structure, homodimer.

The protein localises to the cytoplasm. It carries out the reaction glycyl-tRNA(Ala) + H2O = tRNA(Ala) + glycine + H(+). It catalyses the reaction a D-aminoacyl-tRNA + H2O = a tRNA + a D-alpha-amino acid + H(+). In terms of biological role, an aminoacyl-tRNA editing enzyme that deacylates mischarged D-aminoacyl-tRNAs. Also deacylates mischarged glycyl-tRNA(Ala), protecting cells against glycine mischarging by AlaRS. Acts via tRNA-based rather than protein-based catalysis; rejects L-amino acids rather than detecting D-amino acids in the active site. By recycling D-aminoacyl-tRNA to D-amino acids and free tRNA molecules, this enzyme counteracts the toxicity associated with the formation of D-aminoacyl-tRNA entities in vivo and helps enforce protein L-homochirality. In Streptococcus agalactiae serotype Ia (strain ATCC 27591 / A909 / CDC SS700), this protein is D-aminoacyl-tRNA deacylase.